A 532-amino-acid polypeptide reads, in one-letter code: MSFPDFSASDAHIQWQRFCDLSWYHDDLGVWLDISRMHVNASDLQQLQPRMDKAFAAMQELEAGAIANPDEQRQVGHYWLRTPELAPSSELQQHISREIDLIAAFGRDVVNGTIKAPNGEAFTDVLWIGIGGSGLGPALMIKALQNPGEGLPFHFFDNVDPNGMSNVLAGLEGRLDRTLVVTVSKSGGTPEPHLGMEQARHRLEAAGGQWAGQAVAVTMLDSKLDQQAQKEGWLKRFDMFDWVGGRTSITSAVGLLPGALIGCDIRDFLSGASQMDAATRMADLRRNPAALMAASWHVAGGGRGQRDMVVLPYRDRLEVFSRYLQQLVMESLGKRLDRNGDVVHQGIAVYGNKGSTDQHAYVQQLRDGVDNFFATFIEVLEDVSDIPTISGECPGDFLDGFLQGTRSALTESGRQSMTISMRCFDARRLGALIALFERAVGLYGELVNINAYHQPGVEAGKKAAAAILNLQGRVEAILADGVARSADEIRLALGDGTDESIFWILRHLTGNQRGFSAQGDWSQPASMRFSKG.

The active-site Proton donor is glutamate 330. Residues histidine 359 and lysine 461 contribute to the active site.

This sequence belongs to the GPI family.

The protein localises to the cytoplasm. It catalyses the reaction alpha-D-glucose 6-phosphate = beta-D-fructose 6-phosphate. Its pathway is carbohydrate biosynthesis; gluconeogenesis. It participates in carbohydrate degradation; glycolysis; D-glyceraldehyde 3-phosphate and glycerone phosphate from D-glucose: step 2/4. Its function is as follows. Catalyzes the reversible isomerization of glucose-6-phosphate to fructose-6-phosphate. This is Glucose-6-phosphate isomerase from Synechococcus sp. (strain CC9605).